The following is a 661-amino-acid chain: UvrABC system protein B (661 aa).

In terms of domain architecture, Helicase ATP-binding spans 28–414 (KGVKEGKRHQ…HTDEMIEQII (387 aa)). 41–48 (GATGTGKT) contacts ATP. The Beta-hairpin signature appears at 94–117 (YYDYYQPEAYVPSTDTFIEKDASI). The Helicase C-terminal domain occupies 432 to 598 (QIDDLLSEIQ…TINKKIHDVI (167 aa)). The disordered stretch occupies residues 604 to 625 (NDETNEKQQTELPKKMTKKERQ). Positions 607-617 (TNEKQQTELPK) are enriched in basic and acidic residues. The 36-residue stretch at 625–660 (QKTIENIEKEMKKAAKDLDFEKATELRDMLFELKSE) folds into the UVR domain.

This sequence belongs to the UvrB family. In terms of assembly, forms a heterotetramer with UvrA during the search for lesions. Interacts with UvrC in an incision complex.

The protein resides in the cytoplasm. Its function is as follows. The UvrABC repair system catalyzes the recognition and processing of DNA lesions. A damage recognition complex composed of 2 UvrA and 2 UvrB subunits scans DNA for abnormalities. Upon binding of the UvrA(2)B(2) complex to a putative damaged site, the DNA wraps around one UvrB monomer. DNA wrap is dependent on ATP binding by UvrB and probably causes local melting of the DNA helix, facilitating insertion of UvrB beta-hairpin between the DNA strands. Then UvrB probes one DNA strand for the presence of a lesion. If a lesion is found the UvrA subunits dissociate and the UvrB-DNA preincision complex is formed. This complex is subsequently bound by UvrC and the second UvrB is released. If no lesion is found, the DNA wraps around the other UvrB subunit that will check the other stand for damage. In Staphylococcus haemolyticus (strain JCSC1435), this protein is UvrABC system protein B.